A 313-amino-acid chain; its full sequence is Ribonuclease HIII (313 aa).

Residues 62–88 (AERWTADAETPAPKKPASKKSIPSVYQ) form a disordered region. Residues 96-312 (MSVIGSDEVG…TQKAKRIASK (217 aa)) form the RNase H type-2 domain. Residues Asp102, Glu103, and Asp207 each coordinate a divalent metal cation.

Belongs to the RNase HII family. RnhC subfamily. The cofactor is Mn(2+). Mg(2+) serves as cofactor.

It is found in the cytoplasm. It carries out the reaction Endonucleolytic cleavage to 5'-phosphomonoester.. Functionally, endonuclease that specifically degrades the RNA of RNA-DNA hybrids. The protein is Ribonuclease HIII of Bacillus licheniformis (strain ATCC 14580 / DSM 13 / JCM 2505 / CCUG 7422 / NBRC 12200 / NCIMB 9375 / NCTC 10341 / NRRL NRS-1264 / Gibson 46).